Here is an 803-residue protein sequence, read N- to C-terminus: Protein AMEIOTIC 1 homolog (803 aa).

Disordered regions lie at residues 21-64 and 264-333; these read RPQV…QSLS and RLRQ…RWSA. Basic and acidic residues predominate over residues 39-50; the sequence is NGKDDANHDESK. A compositionally biased stretch (polar residues) spans 51–64; sequence NQSPGLPLSRQSLS. Residues 283–295 show a composition bias toward basic and acidic residues; the sequence is KREEAESSMDKSR. Basic residues predominate over residues 296–313; sequence AARKKKAKTYKSPKKVEK. Over residues 314 to 333 the composition is skewed to basic and acidic residues; it reads RRVVEAKDGDPRRGKDRWSA. Residues 450–567 adopt a coiled-coil conformation; it reads VKKKVEELAE…SSFLSLKEQL (118 aa). The tract at residues 651–688 is disordered; the sequence is ISGGGSSSCPVASGPEQLPRSSSCPSIGPGGLPPSSRA.

The protein resides in the nucleus. It is found in the chromosome. Functionally, plays a fundamental role in building the proper chromosome structure at the beginning of meiosis in male meiocytes. Required for the transition from leptotene to zygotene in meiocytes. Required for homologous chromosome pairing. This chain is Protein AMEIOTIC 1 homolog, found in Oryza sativa subsp. japonica (Rice).